A 292-amino-acid chain; its full sequence is MFEPVPDLNLEASVELGEVNIDQTTPMIKENSGFISRSRRLFAHRSKDDERKLALRFFLQRLYFLDHREIHYLFRCVDAVKDVTITKKNNIIVAPYIALLTIASKGCKLTETMIEAFFPELYNEHSKKFKFNSQVSIIQEKLGYQSGNYHVYDFEPYYSTVALAIRDEHSSGIFNIRQESYLVSSLSEITYRFYLINLKSDLVQWSASTGAVINQMVNTVLITVYEKLQLAIENDSQFTCSLAVESELPIKLLKDRNELFTKFINELKKTSSFKISKRDKDTLLKHFTYDWS.

Belongs to the orthopoxvirus OPG134 family. As to quaternary structure, heterodimer of a 45 kDa (A23R) and a 32 kDa (A8R) subunit to form the virus intermediate transcription factor (VITF)-3.

Acts with RNA polymerase to initiate transcription from intermediate gene promoters. In Monkeypox virus, this protein is Intermediate transcription factor 3 small subunit (OPG134).